The primary structure comprises 256 residues: Inositol-1-monophosphatase (256 aa).

Mg(2+) contacts are provided by glutamate 60, aspartate 77, leucine 79, and aspartate 80. Glutamate 60 is a substrate binding site. Residues 79 to 82 (LDGT), arginine 178, and aspartate 207 contribute to the substrate site. Aspartate 207 is a Mg(2+) binding site.

The protein belongs to the inositol monophosphatase superfamily. Mg(2+) is required as a cofactor.

The catalysed reaction is a myo-inositol phosphate + H2O = myo-inositol + phosphate. The protein is Inositol-1-monophosphatase (suhB) of Caulobacter vibrioides (strain ATCC 19089 / CIP 103742 / CB 15) (Caulobacter crescentus).